Reading from the N-terminus, the 119-residue chain is ATP-dependent Clp protease adapter protein ClpS (119 aa).

The segment at 1 to 29 (MICPPGENKSMAERKQGGQGNGVGSSVVT) is disordered.

The protein belongs to the ClpS family. In terms of assembly, binds to the N-terminal domain of the chaperone ClpA.

Its function is as follows. Involved in the modulation of the specificity of the ClpAP-mediated ATP-dependent protein degradation. The protein is ATP-dependent Clp protease adapter protein ClpS of Caulobacter vibrioides (strain ATCC 19089 / CIP 103742 / CB 15) (Caulobacter crescentus).